A 324-amino-acid chain; its full sequence is uncharacterized protein (324 aa).

The HTH lysR-type domain maps to 6-63 (LKYRELKIISVIAASENISHAATVLGIAQANVSKYLADFESKVGLKVFDRTTRQLMLT). The H-T-H motif DNA-binding region spans 23 to 42 (ISHAATVLGIAQANVSKYLA).

Belongs to the LysR transcriptional regulatory family.

This is an uncharacterized protein from Escherichia coli (strain K12).